The chain runs to 123 residues: Large ribosomal subunit protein bL17 (123 aa).

It belongs to the bacterial ribosomal protein bL17 family. As to quaternary structure, part of the 50S ribosomal subunit. Contacts protein L32.

This Dichelobacter nodosus (strain VCS1703A) protein is Large ribosomal subunit protein bL17.